The primary structure comprises 119 residues: Large ribosomal subunit protein uL22c (119 aa).

Belongs to the universal ribosomal protein uL22 family. Part of the 50S ribosomal subunit.

The protein localises to the plastid. It localises to the chloroplast. Functionally, this protein binds specifically to 23S rRNA. The globular domain of the protein is located near the polypeptide exit tunnel on the outside of the subunit, while an extended beta-hairpin is found that lines the wall of the exit tunnel in the center of the 70S ribosome. The polypeptide is Large ribosomal subunit protein uL22c (rpl22) (Marchantia polymorpha (Common liverwort)).